We begin with the raw amino-acid sequence, 266 residues long: Cytochrome c oxidase assembly factor 7 homolog (266 aa).

2 Sel1-like repeats span residues 32-64 (PEAC…DDYG) and 66-104 (AKSC…NLND). Low complexity predominate over residues 166–179 (AVTASSGSGTSSPP). The interval 166-187 (AVTASSGSGTSSPPAGQPPLKD) is disordered. The stretch at 212-247 (MYACANLSQMYARGDGIEKNEKEAEKYKKLALEMQD) is one Sel1-like 3 repeat.

It belongs to the hcp beta-lactamase family.

In terms of biological role, required for locomotion. Probably involved in the regulation of formation/maintenance of motor neurons at presynaptic terminals at the neuromuscular junction. This is Cytochrome c oxidase assembly factor 7 homolog from Drosophila melanogaster (Fruit fly).